A 412-amino-acid chain; its full sequence is MALLAQQLPRRFNSVKLTSFIKAKQVTKRSARAGKAVLPGFSAQPLLSSDTSFLRRGIKTYRTLFWNRFHSASTNRTKSSAESTLLPSVAEQQERILSLESELPLEEVDDLPPLSPLQSVSEEEAIQIAAYSPLPISSFTLADYVDHSKTLQKLVQLGVDLSKIEKHPDAANLLLRLDFEKHIKQILLFLKDLGLEDNQLGPFLTKNYAIFSEDLENLKTRVAYLQSKNFSKTDIARMVKNAPFLLSFSVERLDNRLGFFQKELELNVKKTRDLVVRLPRLLTGSLEPVKENMKVYHLELGFKHNEIQHMVIKIPKMLTANKRKLTEIFDYVHNVMNIPHHIIVKFPQLFNTRVFKIKERHLFLAYLGRAQYDPAKPNYVSLDKFVSFPDKIFCKEIAKASLNDFEKFLKTL.

A mitochondrion-targeting transit peptide spans 1 to 67 (MALLAQQLPR…IKTYRTLFWN (67 aa)).

This sequence belongs to the mTERF family.

The protein resides in the mitochondrion. Binds promoter DNA and regulates initiation of transcription. Required for normal mitochondrial transcription and translation, and for normal assembly of mitochondrial respiratory complexes. Required for normal mitochondrial function. Maintains 16S rRNA levels and functions in mitochondrial ribosome assembly by regulating the biogenesis of the 39S ribosomal subunit. The chain is Transcription termination factor 3, mitochondrial (Mterf3) from Mus musculus (Mouse).